We begin with the raw amino-acid sequence, 231 residues long: Putative N-acetylmannosamine-6-phosphate 2-epimerase (231 aa).

Belongs to the NanE family.

The catalysed reaction is an N-acyl-D-glucosamine 6-phosphate = an N-acyl-D-mannosamine 6-phosphate. It participates in amino-sugar metabolism; N-acetylneuraminate degradation; D-fructose 6-phosphate from N-acetylneuraminate: step 3/5. Converts N-acetylmannosamine-6-phosphate (ManNAc-6-P) to N-acetylglucosamine-6-phosphate (GlcNAc-6-P). This chain is Putative N-acetylmannosamine-6-phosphate 2-epimerase, found in Listeria monocytogenes serotype 4b (strain CLIP80459).